The chain runs to 150 residues: Arginine repressor (150 aa).

It belongs to the ArgR family.

The protein resides in the cytoplasm. Its pathway is amino-acid biosynthesis; L-arginine biosynthesis [regulation]. Its function is as follows. Regulates arginine biosynthesis genes. This is Arginine repressor from Clostridium botulinum (strain 657 / Type Ba4).